Consider the following 382-residue polypeptide: Palmitoyltransferase ZDHHC16B (382 aa).

Topologically, residues 1 to 75 are cytoplasmic; that stretch reads MRSWRWSVSR…IYWLVDNMTR (75 aa). The chain crosses the membrane as a helical span at residues 76-96; that stretch reads WFGVVFVCLVMALTSSVVVIV. Over 97-107 the chain is Lumenal; it reads YLCVLPIIFSS. A helical transmembrane segment spans residues 108 to 130; it reads YPVYWILWHLCYGHWNLLMVVFH. Topologically, residues 131–196 are cytoplasmic; that stretch reads YYKATTTQPG…NNCVGHFNHR (66 aa). The region spanning 153-203 is the DHHC domain; the sequence is TICKKCIVPKPARTHHCSICNRCILKMDHHCPWLNNCVGHFNHRYFFSFCL. The active-site S-palmitoyl cysteine intermediate is C183. A helical membrane pass occupies residues 197-217; the sequence is YFFSFCLFMTMGCVYCSISAK. Residues 218–275 are Lumenal-facing; that stretch reads DMFLDAYNAIESGRYKGGASQGEAVPGAGLIYISFQHQSSYQTPPPAFTHQERMVHKS. The helical transmembrane segment at 276 to 296 threads the bilayer; sequence LVYLWVLTSSVAVALGALTLW. Over 297–382 the chain is Cytoplasmic; sequence HAILITRGET…PAYKSSTTAI (86 aa).

The protein belongs to the DHHC palmitoyltransferase family.

The protein localises to the endoplasmic reticulum membrane. The enzyme catalyses L-cysteinyl-[protein] + hexadecanoyl-CoA = S-hexadecanoyl-L-cysteinyl-[protein] + CoA. Palmitoyl acyltransferase that mediates palmitoylation of proteins and is required during embryonic heart development. Involved in the proliferation of neural stem cells by regulating the FGF/ERK pathway. This Danio rerio (Zebrafish) protein is Palmitoyltransferase ZDHHC16B.